Consider the following 482-residue polypeptide: Sugar transporter ERD6-like 16 (482 aa).

The next 12 membrane-spanning stretches (helical) occupy residues 42–62 (LMVLFSTFVAVCGSFEFGSCV), 80–100 (LAEFSMFGSILTIGAMLGAVM), 117–137 (SACFCITGWLAVFFTKGALLL), 142–162 (FFTGYGIGVFSYVVPVYIAEI), 173–193 (TLNQLMIVIGSSVSFLIGSLI), 197–217 (TLALTGLAPCIVLLFGLCFIP), 280–300 (VIIGVSLMVFQQFVGINGIGF), 316–336 (LGTIAIACVQVPITVLGTILI), 344–364 (LIMISAGGIFLGCILTGTSFL), 382–402 (GVLIYVAAFSIGMGPVPWVIM), 413–433 (IAGSLVVLVNWSGAWAVSYTF), and 443–463 (GTFYLYSAFAAATIIFVAKMV).

This sequence belongs to the major facilitator superfamily. Sugar transporter (TC 2.A.1.1) family.

It is found in the membrane. Its function is as follows. Sugar transporter. This is Sugar transporter ERD6-like 16 from Arabidopsis thaliana (Mouse-ear cress).